A 427-amino-acid polypeptide reads, in one-letter code: Interferon regulatory factor 3 (427 aa).

Threonine 3 bears the Phosphothreonine mark. Positions 5-111 form a DNA-binding region, IRF tryptophan pentad repeat; it reads KPRILPWLVS…DPHKIYEFVN (107 aa). At serine 14 the chain carries Phosphoserine. Threonine 75 carries the phosphothreonine modification. Basic and acidic residues predominate over residues 91-107; that stretch reads RLAEDRSKDPHDPHKIY. The tract at residues 91–136 is disordered; sequence RLAEDRSKDPHDPHKIYEFVNSGVGDFSQPDTSPDTNGGGSTSDTQ. Serine 97 and serine 123 each carry phosphoserine. The Nuclear export signal signature appears at 139-149; sequence ILDELLGNMVL. Residues 141–427 are mediates interaction with ZDHHC11; sequence DELLGNMVLA…GMDFQGPGES (287 aa). Serine 175 is subject to (Microbial infection) Phosphoserine. Threonine 180 carries the phosphothreonine modification. A Phosphoserine modification is found at serine 188. A Glycyl lysine isopeptide (Lys-Gly) (interchain with G-Cter in ISG15) cross-link involves residue lysine 193. The segment at 200–360 is interaction with HERC5; that stretch reads EEWEFEVTAF…SWPQDQPWTK (161 aa). Phosphothreonine is present on residues threonine 237, threonine 244, and threonine 253. A disulfide bond links cysteine 267 and cysteine 289. Residues lysine 360 and lysine 366 each participate in a glycyl lysine isopeptide (Lys-Gly) (interchain with G-Cter in ISG15) cross-link. Lysine 366 is subject to N6-acetyllysine. Serine 385 bears the Phosphoserine mark. Residue serine 386 is modified to Diphosphoserine. Serine 386 carries the post-translational modification Phosphoserine; by TBK1. Serine 396 is subject to Phosphoserine; by IKKE and TBK1. Serine 398 carries the post-translational modification Phosphoserine. The residue at position 404 (threonine 404) is a Phosphothreonine. A Phosphoserine modification is found at serine 427.

The protein belongs to the IRF family. As to quaternary structure, monomer. Homodimer; phosphorylation-induced. Interacts (when phosphorylated) with CREBBP. Interacts with MAVS (via phosphorylated pLxIS motif). Interacts with TICAM1 (via phosphorylated pLxIS motif). Interacts with STING1 (via phosphorylated pLxIS motif). Interacts with IKBKE and TBK1. Interacts with TICAM2. Interacts with RBCK1. Interacts with HERC5. Interacts with DDX3X (phosphorylated at 'Ser-102'); the interaction allows the phosphorylation and activation of IRF3 by IKBKE. Interacts with TRIM21 and ULK1, in the presence of TRIM21; this interaction leads to IRF3 degradation by autophagy. Interacts with RIOK3; RIOK3 probably mediates the interaction of TBK1 with IRF3. Interacts with ILRUN; the interaction inhibits IRF3 binding to its DNA consensus sequence. Interacts with LYAR; this interaction impairs IRF3 DNA-binding activity. Interacts with TRAF3. Interacts with ZDHHC11; ZDHHC11 recruits IRF3 to STING1 upon DNA virus infection and thereby promotes IRF3 activation. Interacts with HSP90AA1; the interaction mediates IRF3 association with TOMM70. Interacts with BCL2; the interaction decreases upon Sendai virus infection. Interacts with BAX; the interaction is direct, increases upon Sendai virus infection and mediates the formation of the apoptosis complex TOMM70:HSP90AA1:IRF3:BAX. Interacts with DDX56. Interacts with NBR1. (Microbial infection) Interacts with rotavirus A NSP1 (via pLxIS motif); this interaction leads to the proteasome-dependent degradation of IRF3. In terms of assembly, (Microbial infection) Interacts with herpes virus 8/HHV-8 protein VIRF1. As to quaternary structure, (Microbial infection) Interacts with Seneca Valley virus protease 3C; this interaction is involved in the suppression of IRF3 expression and phosphorylation by the virus. (Microbial infection) Interacts with herpes virus 2/HHV-2 protein ICP27; this interaction inhibits IRF3 phosphorylation and nuclear translocation. In terms of assembly, (Microbial infection) Interacts with human cytomegalovirus protein UL44; this interaction prevents IRF3 binding to its promoters. As to quaternary structure, (Microbial infection) Interacts with the two fragments of MERS-COV protein N produced by CASP6 through proteolytic cleavage; both interactions inhibit IRF3 nuclear translocation after activation and IFN signaling. Constitutively phosphorylated on many Ser/Thr residues. Activated following phosphorylation by TBK1 and IKBKE. Innate adapter proteins, such as MAVS, STING1 or TICAM1, are first activated by viral RNA, cytosolic DNA, and bacterial lipopolysaccharide (LPS), respectively, leading to activation of the kinases TBK1 and IKBKE. These kinases then phosphorylate the adapter proteins on the pLxIS motif, leading to recruitment of IRF3, thereby licensing IRF3 for phosphorylation by TBK1. Phosphorylation at Ser-386 is followed by pyrophosphorylation at the same residue, promoting phosphorylation at Ser-396. Phosphorylated IRF3 dissociates from the adapter proteins, dimerizes, and then enters the nucleus to induce IFNs. Post-translationally, pyrophosphorylated by UAP1 following phosphorylation at Ser-386 by TBK1. Pyrophosphorylation promotes subsequent phosphorylation at Ser-396, leading to homodimerization of IRF3. In terms of processing, acetylation at Lys-366 by KAT8 inhibits recruimtent to promoters and transcription factor activity. Acetylation by KAT8 is promoted by phosphorylation at Ser-396. Ubiquitinated; ubiquitination involves RBCK1 leading to proteasomal degradation. Polyubiquitinated; ubiquitination involves TRIM21 leading to proteasomal degradation. Ubiquitinated by UBE3C, leading to its degradation. Deubiquitinated by USP5 on both 'Lys-48'-linked unanchored and 'Lys-63'-linked anchored polyubiquitin, leading to inhibition of anti-RNA viral innate immunity. Post-translationally, ISGylated by HERC5 resulting in sustained IRF3 activation and in the inhibition of IRF3 ubiquitination by disrupting PIN1 binding. The phosphorylation state of IRF3 does not alter ISGylation. In terms of processing, proteolytically cleaved by apoptotic caspases during apoptosis, leading to its inactivation. Cleavage by CASP3 during virus-induced apoptosis inactivates it, preventing cytokine overproduction. (Microbial infection) ISGylated. ISGylation is cleaved and removed by SARS-COV-2 nsp3 which attenuates type I interferon responses. Post-translationally, (Microbial infection) Phosphorylation and subsequent activation of IRF3 is inhibited by vaccinia virus protein E3. In terms of processing, (Microbial infection) Phosphorylated by herpes simplex virus 1/HHV-1 US3 at Ser-175 to prevent IRF3 activation. As to expression, expressed constitutively in a variety of tissues.

Its subcellular location is the cytoplasm. It localises to the nucleus. The protein resides in the mitochondrion. Its activity is regulated as follows. In the absence of viral infection, maintained as a monomer in an autoinhibited state. Phosphorylation by TBK1 and IKBKE disrupts this autoinhibition leading to the liberation of the DNA-binding and dimerization activities and its nuclear localization where it can activate type I IFN and ISG genes. Phosphorylation and activation follow the following steps: innate adapter proteins, such as MAVS, STING1 or TICAM1, are first activated by viral RNA, cytosolic DNA and bacterial lipopolysaccharide (LPS), respectively, leading to activation of the kinases TBK1 and IKBKE. These kinases then phosphorylate the adapter proteins on their pLxIS motif, leading to recruitment of IRF3, thereby licensing IRF3 for phosphorylation by TBK1. Phosphorylated IRF3 dissociates from the adapter proteins, dimerizes, and then enters the nucleus to induce IFNs. With respect to regulation, (Microbial infection) Activated upon coronavirus SARS-CoV-2 infection. Functionally, key transcriptional regulator of type I interferon (IFN)-dependent immune responses which plays a critical role in the innate immune response against DNA and RNA viruses. Regulates the transcription of type I IFN genes (IFN-alpha and IFN-beta) and IFN-stimulated genes (ISG) by binding to an interferon-stimulated response element (ISRE) in their promoters. Acts as a more potent activator of the IFN-beta (IFNB) gene than the IFN-alpha (IFNA) gene and plays a critical role in both the early and late phases of the IFNA/B gene induction. Found in an inactive form in the cytoplasm of uninfected cells and following viral infection, double-stranded RNA (dsRNA), or toll-like receptor (TLR) signaling, is phosphorylated by IKBKE and TBK1 kinases. This induces a conformational change, leading to its dimerization and nuclear localization and association with CREB binding protein (CREBBP) to form dsRNA-activated factor 1 (DRAF1), a complex which activates the transcription of the type I IFN and ISG genes. Can activate distinct gene expression programs in macrophages and can induce significant apoptosis in primary macrophages. In response to Sendai virus infection, is recruited by TOMM70:HSP90AA1 to mitochondrion and forms an apoptosis complex TOMM70:HSP90AA1:IRF3:BAX inducing apoptosis. Key transcription factor regulating the IFN response during SARS-CoV-2 infection. This chain is Interferon regulatory factor 3, found in Homo sapiens (Human).